The chain runs to 583 residues: Laccase-21 (583 aa).

The signal sequence occupies residues 1 to 29; the sequence is MGIAKIPAVLWLLACAVLTFAVAISPAHG. 2 consecutive Plastocyanin-like domains span residues 39-155 and 165-323; these read FITE…PKHG and KEIP…YYTG. Asparagine 85 is a glycosylation site (N-linked (GlcNAc...) asparagine). Cu cation-binding residues include histidine 89, histidine 91, histidine 134, and histidine 136. Residues asparagine 282, asparagine 311, asparagine 384, asparagine 387, asparagine 399, asparagine 409, and asparagine 446 are each glycosylated (N-linked (GlcNAc...) asparagine). A Plastocyanin-like 3 domain is found at 436 to 567; sequence FPNNPAPVFV…NTVFIVKDGK (132 aa). 8 residues coordinate Cu cation: histidine 484, histidine 487, histidine 489, histidine 546, cysteine 547, histidine 548, histidine 552, and methionine 557.

This sequence belongs to the multicopper oxidase family. The cofactor is Cu cation.

The protein localises to the secreted. The protein resides in the extracellular space. It localises to the apoplast. It carries out the reaction 4 hydroquinone + O2 = 4 benzosemiquinone + 2 H2O. Its function is as follows. Lignin degradation and detoxification of lignin-derived products. The protein is Laccase-21 (LAC21) of Oryza sativa subsp. japonica (Rice).